The chain runs to 605 residues: MTSLTIPGLDQAPTTHARLLSWVREVAELTTPDRVVWCDGSQDEWQRLTEQLVEAGTFKRLEKKPNSFYAASDPSDVARVEERTFICSREEKDAGVTNYWMQPDEMKAIMTELYRGCMRGRTMYVIPFCMGPLDADKPKLGVEITDTAYVVVSMHIMTRMGSKVLERLGEDEDFVEALHSVGAPLEPGQQDVPWPCNDTKYITHFPEERKIWSFGSGYGGNALLGKKCFSLRIASAMARDEGWLAEHMLILKLISPEDKVHYVAAAFPSACGKTNLAMLQPTIPGWRVESLGDDIAWMRFGEDGRLYAVNPEAGFFGVAPGTNWKTNPNAMRTIDQGNSLFTNVALTDDGDVWWEEMEGEPQHLTDWKGRDWTPQSDEKAAHPNSRYCTPMSQCPILAPEWDDPNGVPISAILFGGRRKTTIPLVNEAFDWQHGVFMGATLSSEKTAAAAGKVGEVRRDPMAMLPFIGYNVGDYFQHWVNVGKEADSSKLPRIFYVNWFRRDESGKKIVWPGFGENSRVLKWIVERLDGNAAAEDTPIGRVPSADQIDLSGLDTPREDVETALHVDVEEWKAELPLIEEWFASIGDSLPSSMRDEFEALKQRLGA.

Substrate is bound by residues R79 and 218 to 220 (YGG). Mn(2+) contacts are provided by K227 and H247. S269 serves as a coordination point for substrate. Position 270–275 (270–275 (ACGKTN)) interacts with GTP. C271 is a catalytic residue. D294 contacts Mn(2+). The span at 364 to 381 (LTDWKGRDWTPQSDEKAA) shows a compositional bias: basic and acidic residues. Residues 364–385 (LTDWKGRDWTPQSDEKAAHPNS) are disordered. Residue 384–386 (NSR) participates in substrate binding. GTP is bound by residues R386, R417, and 513-516 (FGEN).

It belongs to the phosphoenolpyruvate carboxykinase [GTP] family. In terms of assembly, monomer. Mn(2+) is required as a cofactor.

It is found in the cytoplasm. It catalyses the reaction oxaloacetate + GTP = phosphoenolpyruvate + GDP + CO2. It participates in carbohydrate biosynthesis; gluconeogenesis. Functionally, catalyzes the conversion of oxaloacetate (OAA) to phosphoenolpyruvate (PEP), the rate-limiting step in the metabolic pathway that produces glucose from lactate and other precursors derived from the citric acid cycle. The polypeptide is Phosphoenolpyruvate carboxykinase [GTP] (Saccharopolyspora erythraea (strain ATCC 11635 / DSM 40517 / JCM 4748 / NBRC 13426 / NCIMB 8594 / NRRL 2338)).